Reading from the N-terminus, the 315-residue chain is Methionyl-tRNA formyltransferase (315 aa).

An N-terminal domain region spans residues 2 to 189 (SDSLRIIFAG…LITTLKQLAD (188 aa)). (6S)-5,6,7,8-tetrahydrofolate is bound at residue 113 to 116 (SLLP). The interval 210-315 (KEEARIDWSL…EWFIPGNRLA (106 aa)) is C-terminal domain.

The protein belongs to the Fmt family.

The catalysed reaction is L-methionyl-tRNA(fMet) + (6R)-10-formyltetrahydrofolate = N-formyl-L-methionyl-tRNA(fMet) + (6S)-5,6,7,8-tetrahydrofolate + H(+). In terms of biological role, attaches a formyl group to the free amino group of methionyl-tRNA(fMet). The formyl group appears to play a dual role in the initiator identity of N-formylmethionyl-tRNA by promoting its recognition by IF2 and preventing the misappropriation of this tRNA by the elongation apparatus. This Salmonella typhi protein is Methionyl-tRNA formyltransferase.